The sequence spans 202 residues: MTQVRETVSFKAGDVILYPGVPGPRDRAYRVLEGLVRLEAVDEEGNALTLRLVRPGGFFGEEALFGQERIYFAEAATDVRLEPLPENPDPELLKDLAQHLSQGLAEAYRRIERLATQRLKNRMAAALLELSETPLAHEEEGKVVLKATHDELAAAVGSVRETVTKVIGELAREGYIRSGYGKIQLLDLKGLKELAESRGQGR.

The 73-residue stretch at 117–189 (QRLKNRMAAA…YGKIQLLDLK (73 aa)) folds into the HTH crp-type domain. The H-T-H motif DNA-binding region spans 149–168 (HDELAAAVGSVRETVTKVIG).

In terms of assembly, homodimer.

Functionally, activates transcription. The consensus DNA-binding site of this transcriptional regulator is 5'-WWGTGAN(5-7)ACACWW-3' in which W is A or T and N is G, A, T or C. Regulated genes include those encoding proteins involved in nutrient and energy supply, redox control and polyadenylation of mRNA. Also regulates genes involved in oxidative stress response such as genes encoding manganese superoxide dismutase and catalase, and genes encoding a protein involved in nucleotide excision repair of damaged DNA and putative proteins involved in redox control, protein degradation and transcriptional regulation. The chain is Transcriptional regulator SdrP from Thermus thermophilus (strain ATCC 27634 / DSM 579 / HB8).